The primary structure comprises 459 residues: Spermidine/putrescine import ATP-binding protein PotA (459 aa).

One can recognise an ABC transporter domain in the interval 15 to 334; that stretch reads IELIDIVKQF…PRNIWVAKFI (320 aa). 47-54 provides a ligand contact to ATP; that stretch reads GPSGSGKT. The tract at residues 115-203 is insert; sequence RVPKENVKKE…EEFKNKYFKR (89 aa).

Belongs to the ABC transporter superfamily. Spermidine/putrescine importer (TC 3.A.1.11.1) family. In terms of assembly, the complex is composed of two ATP-binding proteins (PotA), two transmembrane proteins (PotB and PotC) and a solute-binding protein (PotD).

Its subcellular location is the cell membrane. It catalyses the reaction ATP + H2O + polyamine-[polyamine-binding protein]Side 1 = ADP + phosphate + polyamineSide 2 + [polyamine-binding protein]Side 1.. Part of the ABC transporter complex PotABCD involved in spermidine/putrescine import. Responsible for energy coupling to the transport system. The polypeptide is Spermidine/putrescine import ATP-binding protein PotA (Mycoplasmopsis synoviae (strain 53) (Mycoplasma synoviae)).